Consider the following 361-residue polypeptide: Phosphoserine aminotransferase (361 aa).

Arg-42 contacts L-glutamate. Residues 76 to 77, Trp-102, Thr-153, Asp-173, and Gln-196 each bind pyridoxal 5'-phosphate; that span reads AR. N6-(pyridoxal phosphate)lysine is present on Lys-197. 238–239 serves as a coordination point for pyridoxal 5'-phosphate; that stretch reads NT.

It belongs to the class-V pyridoxal-phosphate-dependent aminotransferase family. SerC subfamily. In terms of assembly, homodimer. Pyridoxal 5'-phosphate serves as cofactor.

It is found in the cytoplasm. The enzyme catalyses O-phospho-L-serine + 2-oxoglutarate = 3-phosphooxypyruvate + L-glutamate. It catalyses the reaction 4-(phosphooxy)-L-threonine + 2-oxoglutarate = (R)-3-hydroxy-2-oxo-4-phosphooxybutanoate + L-glutamate. It functions in the pathway amino-acid biosynthesis; L-serine biosynthesis; L-serine from 3-phospho-D-glycerate: step 2/3. Its pathway is cofactor biosynthesis; pyridoxine 5'-phosphate biosynthesis; pyridoxine 5'-phosphate from D-erythrose 4-phosphate: step 3/5. In terms of biological role, catalyzes the reversible conversion of 3-phosphohydroxypyruvate to phosphoserine and of 3-hydroxy-2-oxo-4-phosphonooxybutanoate to phosphohydroxythreonine. The sequence is that of Phosphoserine aminotransferase from Yersinia pseudotuberculosis serotype IB (strain PB1/+).